We begin with the raw amino-acid sequence, 315 residues long: beta-hydroxyaspartate dehydratase (315 aa).

Residue K53 is modified to N6-(pyridoxal phosphate)lysine. Pyridoxal 5'-phosphate contacts are provided by residues N80, 179–183, and T303; that span reads GGGGM.

Requires pyridoxal 5'-phosphate as cofactor.

It carries out the reaction (3S)-3-hydroxy-D-aspartate = iminosuccinate + H2O. Its function is as follows. Catalyzes the dehydration of (2R,3S)-beta-hydroxyaspartate ((3S)-3-hydroxy-D-aspartate) into iminosuccinate. Is essential for the growth of P.denitrificans in the presence of glycolate and glyoxylate since it functions in glyoxylate assimilation via the beta-hydroxyaspartate cycle (BHAC). The chain is beta-hydroxyaspartate dehydratase from Paracoccus denitrificans (strain Pd 1222).